The primary structure comprises 117 residues: Large ribosomal subunit protein bL19 (117 aa).

This sequence belongs to the bacterial ribosomal protein bL19 family.

Functionally, this protein is located at the 30S-50S ribosomal subunit interface and may play a role in the structure and function of the aminoacyl-tRNA binding site. This is Large ribosomal subunit protein bL19 from Shewanella pealeana (strain ATCC 700345 / ANG-SQ1).